Here is a 437-residue protein sequence, read N- to C-terminus: UDP-sugar transporter protein SLC35A5 (437 aa).

Residues 1 to 21 (MKVIFLRQLKTRGMERKCSRR) lie on the Cytoplasmic side of the membrane. A helical membrane pass occupies residues 22–42 (PGLGPPTLYTFLLGIIFITLS). Over 43 to 65 (SSRILLVKYSANEENKYDYLPTT) the chain is Lumenal. A helical membrane pass occupies residues 66-86 (VNVCSELMKLILCILVSLCVI). Residues 87 to 106 (KKEDHQSRHLRCTSWKEFSS) are Cytoplasmic-facing. The chain crosses the membrane as a helical span at residues 107-129 (FMKWSIPAFLYFLDNLIVFYVLS). The Lumenal portion of the chain corresponds to 130-132 (YLQ). Residues 133–155 (PAMAVIFSNFSIITTALLFRIVL) form a helical membrane-spanning segment. Topologically, residues 156–158 (KRH) are cytoplasmic. Residues 159 to 179 (LNWIQWASLLILFLSIVALTA) traverse the membrane as a helical segment. The Lumenal segment spans residues 180–241 (STKTSQHELA…TTARVFSHIR (62 aa)). N-linked (GlcNAc...) asparagine glycosylation occurs at asparagine 217. A helical membrane pass occupies residues 242-262 (LGLGHVLIIVQCFISSMANIY). The Cytoplasmic segment spans residues 263 to 276 (NEKILKEGTQLTES). A helical membrane pass occupies residues 277 to 297 (IFIQNSKLYFFGIVFNGLTLV). Residues 298–316 (LQSSNRDQIQNCGFFYGHN) lie on the Lumenal side of the membrane. The chain crosses the membrane as a helical span at residues 317–337 (AFSVVLIFVTAFQGLSVAFIL). Residues 338–343 (KFLDNM) lie on the Cytoplasmic side of the membrane. The chain crosses the membrane as a helical span at residues 344–364 (FHVLMAQVTTVIITTVSVLVF). Topologically, residues 365 to 367 (DFR) are lumenal. Residues 368–388 (PSLDFFLEAPSVLLSIFIYNA) traverse the membrane as a helical segment. Residues 389 to 437 (SKPQNLECAPKQERIRHLSGSLWERSSGDGEELERLTKLKSDDSDDDTL) lie on the Cytoplasmic side of the membrane. Residues serine 407, serine 429, and serine 432 each carry the phosphoserine modification. Positions 412–437 (ERSSGDGEELERLTKLKSDDSDDDTL) are disordered. Basic and acidic residues predominate over residues 421–430 (LERLTKLKSD).

The protein belongs to the nucleotide-sugar transporter family. SLC35A subfamily. As to quaternary structure, probably forms homooligomers and heterooligomers with SLC35A1, SLC35A2, SLC35A3 and SLC35A4.

The protein localises to the golgi apparatus membrane. The enzyme catalyses UMP(out) + UDP-alpha-D-glucuronate(in) = UMP(in) + UDP-alpha-D-glucuronate(out). The catalysed reaction is UMP(out) + UDP-N-acetyl-alpha-D-glucosamine(in) = UMP(in) + UDP-N-acetyl-alpha-D-glucosamine(out). It carries out the reaction UDP-N-acetyl-alpha-D-galactosamine(in) + UMP(out) = UDP-N-acetyl-alpha-D-galactosamine(out) + UMP(in). Probable UDP-sugar:UMP transmembrane antiporter involved in UDP-alpha-D-glucuronate/UDP-GlcA, UDP-GlcNAc/UDP-N-acetyl-alpha-D-glucosamine and UDP-N-acetyl-alpha-D-galactosamine/UDP-GalNAc transport from the cytosol to the lumen of the Golgi. The protein is UDP-sugar transporter protein SLC35A5 of Mus musculus (Mouse).